A 320-amino-acid polypeptide reads, in one-letter code: Cytochrome c biogenesis protein CcsA (320 aa).

The next 7 helical transmembrane spans lie at 14-34 (VLLL…WCFW), 68-88 (GHFP…ACTL), 101-121 (LVAA…SFAL), 146-166 (VIMV…AVLM), 226-246 (TITV…VWAN), 260-277 (TWAL…HTRL), and 289-309 (VASL…LLGI).

It belongs to the CcmF/CycK/Ccl1/NrfE/CcsA family. As to quaternary structure, may interact with ccs1.

The protein resides in the cellular thylakoid membrane. Functionally, required during biogenesis of c-type cytochromes (cytochrome c6 and cytochrome f) at the step of heme attachment. This Synechococcus sp. (strain WH7803) protein is Cytochrome c biogenesis protein CcsA.